Consider the following 430-residue polypeptide: Enolase (430 aa).

Gln-167 contributes to the (2R)-2-phosphoglycerate binding site. Glu-209 (proton donor) is an active-site residue. 3 residues coordinate Mg(2+): Asp-246, Glu-287, and Asp-314. (2R)-2-phosphoglycerate contacts are provided by Lys-339, Arg-368, Ser-369, and Lys-390. Lys-339 (proton acceptor) is an active-site residue.

It belongs to the enolase family. Requires Mg(2+) as cofactor.

Its subcellular location is the cytoplasm. It localises to the secreted. The protein resides in the cell surface. It catalyses the reaction (2R)-2-phosphoglycerate = phosphoenolpyruvate + H2O. Its pathway is carbohydrate degradation; glycolysis; pyruvate from D-glyceraldehyde 3-phosphate: step 4/5. Its function is as follows. Catalyzes the reversible conversion of 2-phosphoglycerate (2-PG) into phosphoenolpyruvate (PEP). It is essential for the degradation of carbohydrates via glycolysis. The protein is Enolase of Prochlorococcus marinus (strain AS9601).